Here is a 985-residue protein sequence, read N- to C-terminus: Ankyrin repeat domain-containing protein 24 (985 aa).

ANK repeat units follow at residues 52–81 (EGKS…DVMS), 85–114 (AGYN…VVDI), 118–147 (SGWT…HMNP), 151–180 (SGAT…ATND), and 184–213 (QGRT…QLSI). Disordered stretches follow at residues 243–293 (RSSP…DRDA), 311–360 (IRGL…LGRE), 386–412 (QDEE…SAEE), 476–503 (YTEA…TAYQ), and 594–614 (DNAE…NPGM). Residues 291 to 488 (RDAYEEIVRL…AMHSQQQQQE (198 aa)) are a coiled coil. Composition is skewed to basic and acidic residues over residues 311-326 (IRGL…KEPL) and 349-360 (EKQEEKESLGRE).

As to quaternary structure, homodimer. Interacts (via C-terminal domain) with TRIOBP (via C-terminal domain) isoform 4; recruits TRIOBP isoform 4 to stereocilia rootlets. In terms of tissue distribution, expressed in vestibular hair bundles.

The protein localises to the cell membrane. It localises to the cell projection. It is found in the stereocilium. Functionally, component of the stereocilia rootlet in hair cells of inner ear. Bridges the apical plasma membrane with the lower rootlet and maintains normal distribution of TRIOBP, thereby reinforcing stereocilia insertion points and organizing rootlets for hearing with long-term resilience. In Mus musculus (Mouse), this protein is Ankyrin repeat domain-containing protein 24 (Ankrd24).